A 102-amino-acid polypeptide reads, in one-letter code: ATP-dependent Clp protease adapter protein ClpS (102 aa).

It belongs to the ClpS family. As to quaternary structure, binds to the N-terminal domain of the chaperone ClpA.

Involved in the modulation of the specificity of the ClpAP-mediated ATP-dependent protein degradation. This is ATP-dependent Clp protease adapter protein ClpS from Shewanella sp. (strain ANA-3).